The sequence spans 122 residues: UPF0382 membrane protein SAUSA300_0565 (122 aa).

4 helical membrane passes run 3–23 (LFIILGALNAMMAVGTGAFGA), 46–66 (MYHGLALLIIGVISGTTSINV), 69–89 (AGWLIFAGIIFFSGSLYILVL), and 98–118 (ITPIGGVLFIIGWIMLIIATF).

It belongs to the UPF0382 family.

The protein localises to the cell membrane. This is UPF0382 membrane protein SAUSA300_0565 from Staphylococcus aureus (strain USA300).